Here is a 75-residue protein sequence, read N- to C-terminus: Psi-conotoxin PIIIE (75 aa).

A signal peptide spans 1-19 (MSKLGALLTICLLLFPITA). A propeptide spanning residues 20-50 (LLMDGDQPADRPAERMDYDISSEVHRLLERR) is cleaved from the precursor. P52, P53, and P64 each carry 4-hydroxyproline. 3 disulfides stabilise this stretch: C54-C66, C55-C71, and C60-C72. G74 carries the glycine amide modification.

As to expression, expressed by the venom duct.

The protein localises to the secreted. Its function is as follows. Psi-conotoxins act on postsynaptic membranes, and act as non-competitive antagonist of nicotinic acetylcholine receptors (nAChR). Is more toxic than Psi-conotoxin PIIIF. In vivo, has paralytic activity when injected intraperitoneally into goldfish. This Conus purpurascens (Purple cone) protein is Psi-conotoxin PIIIE.